The following is a 361-amino-acid chain: Chorismate synthase (361 aa).

2 residues coordinate NADP(+): Arg48 and Arg54. Residues 125 to 127 (RSS), 238 to 239 (NA), Gly278, 293 to 297 (KPTSS), and Arg319 each bind FMN.

This sequence belongs to the chorismate synthase family. As to quaternary structure, homotetramer. It depends on FMNH2 as a cofactor.

It catalyses the reaction 5-O-(1-carboxyvinyl)-3-phosphoshikimate = chorismate + phosphate. Its pathway is metabolic intermediate biosynthesis; chorismate biosynthesis; chorismate from D-erythrose 4-phosphate and phosphoenolpyruvate: step 7/7. Its function is as follows. Catalyzes the anti-1,4-elimination of the C-3 phosphate and the C-6 proR hydrogen from 5-enolpyruvylshikimate-3-phosphate (EPSP) to yield chorismate, which is the branch point compound that serves as the starting substrate for the three terminal pathways of aromatic amino acid biosynthesis. This reaction introduces a second double bond into the aromatic ring system. The protein is Chorismate synthase of Salmonella paratyphi A (strain ATCC 9150 / SARB42).